The primary structure comprises 1165 residues: Protein hsr-9 (1165 aa).

Disordered stretches follow at residues 1–26, 70–578, 608–713, and 874–913; these read MASSSNTMEFEEDDSTVTQTSLPTTT, AEDE…TEME, KYSM…IPLK, and TRARKPTTVSNQAKPKGRKKKGVDLVSSRGGSASPAEEEE. Residues 16–26 show a composition bias toward low complexity; that stretch reads TVTQTSLPTTT. 3 stretches are compositionally biased toward basic and acidic residues: residues 98–114, 123–140, and 149–162; these read KDAKSGESMNDSEKSES, TFEKKIISMDTSDDKLDI, and DTEKPEENEEKVVG. Composition is skewed to acidic residues over residues 163 to 179, 211 to 230, and 280 to 289; these read DEDEEDIDDVQEDDEDE, EKEEPENEDDTEEPENEVEV, and GESEANEENQ. Residues 306-317 show a composition bias toward polar residues; sequence ATVSSTPSSNTP. Residues 397–408 are compositionally biased toward basic and acidic residues; it reads NTEHPTEEETPK. Low complexity predominate over residues 415 to 431; that stretch reads SAASSSATSSAVPTPRS. Positions 446-461 are enriched in basic and acidic residues; that stretch reads LQEKETEDPTKTHDTN. Residues 533 to 543 are compositionally biased toward acidic residues; that stretch reads DPIEEADETIE. Positions 554–563 are enriched in low complexity; it reads AAKSAPSSSK. Composition is skewed to basic and acidic residues over residues 662–671 and 694–708; these read KKEEEHHEND and SEASDIKTPPAKKEP. The 106-residue stretch at 923-1028 folds into the BRCT domain; the sequence is IGKNIFTGKV…KCVDYTDYVL (106 aa).

Expressed in germ cells.

It is found in the nucleus. Functionally, may have a role in DNA double-strand break repair following gamma-irradiation. This chain is Protein hsr-9, found in Caenorhabditis elegans.